Here is a 341-residue protein sequence, read N- to C-terminus: UDP-N-acetylenolpyruvoylglucosamine reductase (341 aa).

Positions 13 to 185 (FGVEQSCLSM…TAVGLRLPKA (173 aa)) constitute an FAD-binding PCMH-type domain. Arg161 is a catalytic residue. Ser231 acts as the Proton donor in catalysis. The active site involves Glu327.

The protein belongs to the MurB family. It depends on FAD as a cofactor.

The protein resides in the cytoplasm. The catalysed reaction is UDP-N-acetyl-alpha-D-muramate + NADP(+) = UDP-N-acetyl-3-O-(1-carboxyvinyl)-alpha-D-glucosamine + NADPH + H(+). It functions in the pathway cell wall biogenesis; peptidoglycan biosynthesis. Its function is as follows. Cell wall formation. In Shewanella sp. (strain MR-4), this protein is UDP-N-acetylenolpyruvoylglucosamine reductase.